A 282-amino-acid chain; its full sequence is Nucleotide-binding protein XCV3122 (282 aa).

An ATP-binding site is contributed by 5–12 (GLSGSGKS). 57-60 (DVRS) serves as a coordination point for GTP.

Belongs to the RapZ-like family.

In terms of biological role, displays ATPase and GTPase activities. This is Nucleotide-binding protein XCV3122 from Xanthomonas euvesicatoria pv. vesicatoria (strain 85-10) (Xanthomonas campestris pv. vesicatoria).